The following is a 292-amino-acid chain: Peroxisomal 2,4-dienoyl-CoA reductase [(3E)-enoyl-CoA-producing] (292 aa).

The residue at position 2 (A2) is an N-acetylalanine. NADP(+)-binding positions include 35–40 (GGGSGI), 60–64 (RSLPR), and D86. R60 contacts substrate. Residues R88, F118, and 126-128 (SFN) contribute to the substrate site. At K151 the chain carries N6-acetyllysine. NADP(+) contacts are provided by residues K182 and 208-214 (PGPISGT). Residue R219 coordinates substrate. S287 bears the Phosphoserine mark. Positions 290–292 (AKL) match the Microbody targeting signal motif. Position 291 is an N6-acetyllysine (K291).

Belongs to the short-chain dehydrogenases/reductases (SDR) family. 2,4-dienoyl-CoA reductase subfamily. Monomer, dimer and oligomer.

The protein resides in the peroxisome. It carries out the reaction a (2E,4Z)-dienoyl-CoA + NADPH + H(+) = a 4,5-saturated-(3E)-enoyl-CoA + NADP(+). The enzyme catalyses a (2E,4E)-dienoyl-CoA + NADPH + H(+) = a 4,5-saturated-(3E)-enoyl-CoA + NADP(+). It catalyses the reaction (2E,4E)-hexadienoyl-CoA + NADPH + H(+) = (3E)-hexenoyl-CoA + NADP(+). The catalysed reaction is (2E,4E)-decadienoyl-CoA + NADPH + H(+) = (3E)-decenoyl-CoA + NADP(+). It carries out the reaction (2E,4Z,7Z,10Z,13Z,16Z,19Z)-docosaheptaenoyl-CoA + NADPH + H(+) = (3E,7Z,10Z,13Z,16Z,19Z)-docosahexaenoyl-CoA + NADP(+). In terms of biological role, auxiliary enzyme of beta-oxidation. Participates in the degradation of unsaturated fatty enoyl-CoA esters having double bonds in both even- and odd-numbered positions in peroxisome. Catalyzes the NADP-dependent reduction of 2,4-dienoyl-CoA to yield trans-3-enoyl-CoA. Has activity towards short and medium chain 2,4-dienoyl-CoAs, but also towards 2,4,7,10,13,16,19-docosaheptaenoyl-CoA, suggesting that it does not constitute a rate limiting step in the peroxisomal degradation of docosahexaenoic acid. In Pongo abelii (Sumatran orangutan), this protein is Peroxisomal 2,4-dienoyl-CoA reductase [(3E)-enoyl-CoA-producing] (DECR2).